The primary structure comprises 638 residues: 1-deoxy-D-xylulose-5-phosphate synthase (638 aa).

Residues histidine 78 and 119–121 (GHS) each bind thiamine diphosphate. Aspartate 151 provides a ligand contact to Mg(2+). Residues 152–153 (GA), asparagine 180, tyrosine 289, and glutamate 371 contribute to the thiamine diphosphate site. Asparagine 180 is a Mg(2+) binding site.

It belongs to the transketolase family. DXPS subfamily. In terms of assembly, homodimer. Mg(2+) serves as cofactor. It depends on thiamine diphosphate as a cofactor.

It catalyses the reaction D-glyceraldehyde 3-phosphate + pyruvate + H(+) = 1-deoxy-D-xylulose 5-phosphate + CO2. It participates in metabolic intermediate biosynthesis; 1-deoxy-D-xylulose 5-phosphate biosynthesis; 1-deoxy-D-xylulose 5-phosphate from D-glyceraldehyde 3-phosphate and pyruvate: step 1/1. Catalyzes the acyloin condensation reaction between C atoms 2 and 3 of pyruvate and glyceraldehyde 3-phosphate to yield 1-deoxy-D-xylulose-5-phosphate (DXP). The protein is 1-deoxy-D-xylulose-5-phosphate synthase of Bartonella bacilliformis (strain ATCC 35685 / KC583 / Herrer 020/F12,63).